Consider the following 274-residue polypeptide: Orotidine 5'-phosphate decarboxylase (274 aa).

K95 functions as the Proton donor in the catalytic mechanism.

Belongs to the OMP decarboxylase family. Type 2 subfamily.

It carries out the reaction orotidine 5'-phosphate + H(+) = UMP + CO2. The protein operates within pyrimidine metabolism; UMP biosynthesis via de novo pathway; UMP from orotate: step 2/2. In Mycobacterium avium (strain 104), this protein is Orotidine 5'-phosphate decarboxylase.